The sequence spans 125 residues: Small ribosomal subunit protein uS12 (125 aa).

The disordered stretch occupies residues 9–28 (RSERSKLKKKTKSPALKQCP). The residue at position 89 (D89) is a 3-methylthioaspartic acid. Residues 104-125 (AQGVKDRKQGRSKYGTKRPKKA) are disordered. Residues 113-125 (GRSKYGTKRPKKA) show a composition bias toward basic residues.

The protein belongs to the universal ribosomal protein uS12 family. Part of the 30S ribosomal subunit. Contacts proteins S8 and S17. May interact with IF1 in the 30S initiation complex.

With S4 and S5 plays an important role in translational accuracy. Functionally, interacts with and stabilizes bases of the 16S rRNA that are involved in tRNA selection in the A site and with the mRNA backbone. Located at the interface of the 30S and 50S subunits, it traverses the body of the 30S subunit contacting proteins on the other side and probably holding the rRNA structure together. The combined cluster of proteins S8, S12 and S17 appears to hold together the shoulder and platform of the 30S subunit. The protein is Small ribosomal subunit protein uS12 of Rippkaea orientalis (strain PCC 8801 / RF-1) (Cyanothece sp. (strain PCC 8801)).